Reading from the N-terminus, the 2155-residue chain is Alpha-tectorin (2155 aa).

The N-terminal stretch at 1–24 (MNYSSLLRIWVSFIFALVRHQAQP) is a signal peptide. Residues asparagine 34, asparagine 187, asparagine 215, asparagine 278, asparagine 455, asparagine 506, asparagine 528, and asparagine 560 are each glycosylated (N-linked (GlcNAc...) asparagine). The NIDO domain occupies 98–252 (PFWADVHNGI…GRWAFKVDGK (155 aa)). The VWFC domain maps to 260–314 (CTSRGQFLRRGEVFWDDLNCTIKCRCLDFNNEIYCQEASCSPYEVCEPKGRFFYC). The VWFD 1 domain maps to 320 to 500 (STCVVFGEPH…RVYHADWKCG (181 aa)). 2 disulfide bridges follow: cysteine 322–cysteine 461 and cysteine 344–cysteine 499. Positions 597-650 (CPSFSHYSVCTSSCPDTCSDLTASQNCATPCTEGCECNEGFVLSTSQCVPLHKC) constitute a TIL 1 domain. N-linked (GlcNAc...) asparagine glycans are attached at residues asparagine 670, asparagine 687, asparagine 813, asparagine 843, asparagine 855, asparagine 898, asparagine 920, asparagine 931, and asparagine 949. The region spanning 711 to 886 (TVCLLSQNQV…SWTTFEEICN (176 aa)) is the VWFD 2 domain. Cysteine 713 and cysteine 849 are oxidised to a cystine. The region spanning 984–1036 (CPENSHFEECMTCTETCETLALGPICVDSCSEGCQCDEGYALQGSQCVPRSEC) is the TIL 2 domain. Asparagine 1048, asparagine 1064, asparagine 1235, and asparagine 1364 each carry an N-linked (GlcNAc...) asparagine glycan. Residues 1098–1278 (ASCIVSGYGH…SWVKRDTFCQ (181 aa)) form the VWFD 3 domain. 2 disulfides stabilise this stretch: cysteine 1100/cysteine 1241 and cysteine 1122/cysteine 1277. One can recognise a TIL 3 domain in the interval 1372 to 1425 (CPPNSHYESCVSVCQPRCAAIRLKSDCNHYCVEGCQCDAGYVLNGKSCILPHNC). Residues 1485 to 1666 (SYCLAAGGGV…QKRPLAPSCN (182 aa)) enclose the VWFD 4 domain. Disulfide bonds link cysteine 1487–cysteine 1622, cysteine 1509–cysteine 1665, cysteine 1717–cysteine 1775, cysteine 1741–cysteine 1784, cysteine 1786–cysteine 1818, cysteine 1806–cysteine 1898, and cysteine 1837–cysteine 1857. N-linked (GlcNAc...) asparagine glycans are attached at residues asparagine 1538, asparagine 1565, asparagine 1756, asparagine 1772, asparagine 1794, asparagine 1851, asparagine 1864, asparagine 1880, asparagine 1920, and asparagine 1939. Residues 1805 to 2059 (TCKAAQMEVS…YSCKINCPQN (255 aa)) form the ZP domain. 3 disulfide bridges follow: cysteine 1980/cysteine 2040, cysteine 2001/cysteine 2056, and cysteine 2045/cysteine 2052. Residue asparagine 2091 is the site of GPI-anchor amidated asparagine attachment. Positions 2092 to 2155 (GGCEQICTSR…HLIYKSGATS (64 aa)) are cleaved as a propeptide — removed in mature form.

May form homomeric filament after self-association or heteromeric filament after association with beta-tectorin. Interacts with CEACAM16. Post-translationally, 3 products of tectorin seem to exist: HMM, MMM and LMM. They may be generated by active processing or the result of proteolysis occurring between intrachain disulfide bonds. The presence of a hydrophobic C-terminus preceded by a potential cleavage site strongly suggests that tectorins are synthesized as glycosylphosphatidylinositol-linked, membrane-bound precursors. Tectorins are targeted to the apical surface of the inner ear epithelia by the lipid and proteolytically released into the extracellular compartment. In terms of tissue distribution, cochlea-specific.

Its subcellular location is the cell membrane. It localises to the secreted. It is found in the extracellular space. The protein resides in the extracellular matrix. In terms of biological role, one of the major non-collagenous components of the tectorial membrane. The tectorial membrane is an extracellular matrix of the inner ear that covers the neuroepithelium of the cochlea and contacts the stereocilia bundles of specialized sensory hair cells. Sound induces movement of these hair cells relative to the tectorial membrane, deflects the stereocilia and leads to fluctuations in hair-cell membrane potential, transducing sound into electrical signals. The protein is Alpha-tectorin (Tecta) of Mus musculus (Mouse).